We begin with the raw amino-acid sequence, 131 residues long: UPF0102 protein RPD_0400 (131 aa).

This sequence belongs to the UPF0102 family.

This chain is UPF0102 protein RPD_0400, found in Rhodopseudomonas palustris (strain BisB5).